Here is a 59-residue protein sequence, read N- to C-terminus: Conotoxin reg3.15 (59 aa).

The signal sequence occupies residues 1 to 15 (RVLLTICLLLFPLTA). Positions 16–44 (IPLGGDQPAERMRNVRSAVQDPRFDSVGW) are excised as a propeptide. Disulfide bonds link Cys45/Cys59, Cys46/Cys55, and Cys51/Cys58.

This sequence belongs to the conotoxin M superfamily. In terms of tissue distribution, expressed by the venom duct.

The protein localises to the secreted. This chain is Conotoxin reg3.15, found in Conus regius (Crown cone).